The sequence spans 530 residues: Glutamate--tRNA ligase (530 aa).

The 'HIGH' region motif lies at 26 to 36 (PSPTGKAHIGT). Residues 267-271 (KLSKR) carry the 'KMSKS' region motif. Lys270 contributes to the ATP binding site.

The protein belongs to the class-I aminoacyl-tRNA synthetase family. Glutamate--tRNA ligase type 1 subfamily. Monomer.

The protein resides in the cytoplasm. The enzyme catalyses tRNA(Glu) + L-glutamate + ATP = L-glutamyl-tRNA(Glu) + AMP + diphosphate. Catalyzes the attachment of glutamate to tRNA(Glu) in a two-step reaction: glutamate is first activated by ATP to form Glu-AMP and then transferred to the acceptor end of tRNA(Glu). In Gloeobacter violaceus (strain ATCC 29082 / PCC 7421), this protein is Glutamate--tRNA ligase.